Here is a 1687-residue protein sequence, read N- to C-terminus: Vitellogenin-2 (1687 aa).

An N-terminal signal peptide occupies residues 1-15; sequence MRVLVLALTVALVAG. One can recognise a Vitellogenin domain in the interval 24–663; that stretch reads FAPGKTYEYK…DAATVLPKNI (640 aa). Residues Asn-941, Asn-945, Asn-954, Asn-1004, Asn-1019, and Asn-1083 are each glycosylated (N-linked (GlcNAc...) asparagine). The interval 1081–1174 is disordered; that stretch reads LKNSTKASSS…SSSSSKTKWQ (94 aa). Over residues 1088-1127 the composition is skewed to low complexity; that stretch reads SSSSSGSSRSSRSRSSSSSSSSSSSSSSRSSSSSSRSSSS. Residue Asn-1142 is glycosylated (N-linked (GlcNAc...) asparagine). Low complexity predominate over residues 1148 to 1169; it reads SSSSSSSSSSSSSSSSSSSSSS. Residues Asn-1179, Asn-1257, Asn-1292, Asn-1342, Asn-1361, Asn-1366, and Asn-1390 are each glycosylated (N-linked (GlcNAc...) asparagine). In terms of domain architecture, VWFD spans 1417–1593; it reads AECTVVEDTV…SWVLPAKSCR (177 aa). Disulfide bonds link Cys-1419–Cys-1556 and Cys-1442–Cys-1592. N-linked (GlcNAc...) asparagine glycosylation is found at Asn-1577 and Asn-1655.

Phosvitin, an egg yolk storage protein, is one of the most highly phosphorylated (10%) proteins in nature. As to expression, produced by the liver, secreted into the blood and then sequestered by receptor mediated endocytosis into growing oocytes, where it is generally cleaved, giving rise to the respective yolk components lipovitellins and phosvitin.

Precursor of the egg-yolk proteins that are sources of nutrients during early development of oviparous organisms. This is Vitellogenin-2 from Fundulus heteroclitus (Killifish).